A 1042-amino-acid polypeptide reads, in one-letter code: Kinesin-like protein KIN-5A (1042 aa).

The span at 1 to 14 (MDSNNSKKGSSVKS) shows a compositional bias: low complexity. The tract at residues 1 to 45 (MDSNNSKKGSSVKSPCQTPRSTEKSNRDFRVDSNSNSNPVSKNEK) is disordered. Basic and acidic residues predominate over residues 21–31 (STEKSNRDFRV). Over residues 32–41 (DSNSNSNPVS) the composition is skewed to polar residues. Residues 50–392 (NIQVIVRCRP…LDYAHRAKHI (343 aa)) form the Kinesin motor domain. 136-143 (GQTGTGKT) provides a ligand contact to ATP. Residues 480-517 (TAGLREKLDKTEKKLYETEQALLDLEEKHRQAVATIKE) are a coiled coil. The tract at residues 1021-1042 (KQMQNGEAKHVSNGRPPLTAIN) is disordered.

Belongs to the TRAFAC class myosin-kinesin ATPase superfamily. Kinesin family. KIN-5/BimC subfamily.

Its subcellular location is the cytoplasm. It is found in the cytoskeleton. The protein localises to the spindle. Responsible for microtubule translocation. May be important for the organization of phragmoplast-specific arrays of microtubules. Plays an essential role in stabilizing the mitotic spindle. Required during mitotic cytokinesis. This is Kinesin-like protein KIN-5A from Arabidopsis thaliana (Mouse-ear cress).